We begin with the raw amino-acid sequence, 425 residues long: 26S proteasome regulatory subunit 7 (425 aa).

208–215 (GPPGTGKT) serves as a coordination point for ATP.

Belongs to the AAA ATPase family.

It localises to the cytoplasm. It is found in the nucleus. In terms of biological role, the 26S proteasome is involved in the ATP-dependent degradation of ubiquitinated proteins. The regulatory (or ATPase) complex confers ATP dependency and substrate specificity to the 26S complex. This Prunus persica (Peach) protein is 26S proteasome regulatory subunit 7 (RPT1).